The chain runs to 1351 residues: Alpha-latrotoxin-Lh1a (1351 aa).

The N-terminal stretch at 1–7 is a signal peptide; it reads SLVRMRR. The interval 4-7 is furin-like endopeptidase recognition region; sequence RMRR. Residues 226-245 form a helix H8 is the probable transmembrane region of the tetrameric pore inserted in the target cell membrane region; that stretch reads VLYALLYGTQTYVSVMFFLL. Cysteines 401 and 1054 form a disulfide. ANK repeat units lie at residues 446–477, 478–509, 513–542, 547–577, 581–610, 614–644, 648–678, 683–711, 717–746, 750–779, 783–812, 816–846, 850–879, 883–912, 916–945, 959–991, 992–1019, 1023–1052, 1056–1085, 1089–1119, 1125–1154, and 1158–1187; these read LYNTANNPDSAVGFKEFTKLNYDGANIRATFE, QGRTVFHAAAKSGNSRIMIGLTFLVKSNELNQ, KGYTPIHVAADSGNAGIVNLLIQRGVSINS, FLQTPLHLAAQRGFVTTFQRLMESPEININE, DGFTPLHYAVRGGERILEAFINQIRIDLNA, KGLTPFHLAIIKDDWPVASTLLGSKKVDVNA, NNMTALHYAAILGYLETTKQLINLKEINADV, GLLSALHYAILYKHDDVASFLLRSSNVNV, GGITPLHLAVIQGRTQILSLMFDIGVNIEQ, EKYTPLHLAAMSKYPELIQILLDQGSNFEA, SGATPLHLATFKGKSKAALILLNNEVNWRD, NGQMPIHGAAMNGLLDVAQAIISIDATVLDI, NSDTPLNLAAQKSHIDVIKYFIDQGADINT, TGHAPLLAFSKKGNLDMVKYLFDKNANVYI, DGINFFYYAVRNGHLNIVKYAMSEKDKFEW, EECAISHFAVCDAVQFDKIEIVKYFVTTLGNFA, ICGPLHQAARYGHLDIEKYLVEEEDLNV, KPDTPLCYASENGHLAVVQYLVSNGAKVNH, NGMTAIDKAITKNHLQVVQFLAANGVDFRR, LGATPFLTAVSENAFDIAEYLIRENRQDIDI, DKETALHLAVYYKNLQMIKLLVKYGIDMTI, and YDKTALDIATDLKNSNIVEYLKTKSGKFRR. The furin-like endopeptidase recognition region stretch occupies residues 1184–1187; it reads KFRR. A propeptide spanning residues 1188 to 1351 is cleaved from the precursor; that stretch reads EYKSSYGEHS…LGSVIMNSHS (164 aa).

The protein belongs to the cationic peptide 01 (latrotoxin) family. 03 (alpha-latrotoxin) subfamily. In terms of assembly, homotetramer in membranes. Processed by furin-like proteases at both the N- and C-termini. Expressed in venom gland, cephalothorax, and abdomen tissues from both males and females.

It is found in the secreted. The protein localises to the target cell membrane. In terms of biological role, presynaptic neurotoxin that causes massive release of neurotransmitters from vertebrate (but not invertebrate) nerve terminals and endocrine cells via a complex mechanism involving activation of receptor(s) and toxin insertion into the plasma membrane with subsequent pore formation. Binds to neurexin-1-alpha (NRXN1) in a calcium dependent manner, adhesion G protein-coupled receptor L1 (ADGRL1, also termed latrophilin-1 and calcium-independent receptor of latrotoxin (CIRL)), and receptor-type tyrosine-protein phosphatase S (PTPRS), also termed PTP sigma. NRXN1 and PTPRS are suggested to provide a platform for binding and subsequent pore formation events. In contrast, binding to ADGRL1 does not involve oligomerization and channel formation, but direct downstream stimulation of the synaptic fusion machinery. Induces rapid muscle contracture and loss of twitch tension when added to the isolated and indirectly stimulated chick biventer cervicis nerve-muscle preparation. The sequence is that of Alpha-latrotoxin-Lh1a from Latrodectus hasselti (Redback spider).